A 341-amino-acid chain; its full sequence is Glyceraldehyde-3-phosphate dehydrogenase 2 (341 aa).

Residues 12–13, arginine 78, and threonine 120 contribute to the NAD(+) site; that span reads RI. D-glyceraldehyde 3-phosphate-binding positions include 152 to 154 and threonine 183; that span reads SCT. Residue cysteine 153 is the Nucleophile of the active site. NAD(+) is bound at residue asparagine 184. Residues arginine 198, 211–212, and arginine 234 contribute to the D-glyceraldehyde 3-phosphate site; that span reads TG. Residue asparagine 313 participates in NAD(+) binding.

It belongs to the glyceraldehyde-3-phosphate dehydrogenase family. As to quaternary structure, homotetramer.

The protein resides in the cytoplasm. It catalyses the reaction D-glyceraldehyde 3-phosphate + phosphate + NAD(+) = (2R)-3-phospho-glyceroyl phosphate + NADH + H(+). Its pathway is carbohydrate degradation; glycolysis; pyruvate from D-glyceraldehyde 3-phosphate: step 1/5. Its function is as follows. Catalyzes the oxidative phosphorylation of glyceraldehyde 3-phosphate (G3P) to 1,3-bisphosphoglycerate (BPG) using the cofactor NAD. The first reaction step involves the formation of a hemiacetal intermediate between G3P and a cysteine residue, and this hemiacetal intermediate is then oxidized to a thioester, with concomitant reduction of NAD to NADH. The reduced NADH is then exchanged with the second NAD, and the thioester is attacked by a nucleophilic inorganic phosphate to produce BPG. This Staphylococcus epidermidis (strain ATCC 35984 / DSM 28319 / BCRC 17069 / CCUG 31568 / BM 3577 / RP62A) protein is Glyceraldehyde-3-phosphate dehydrogenase 2 (gapA2).